A 71-amino-acid chain; its full sequence is Conotoxin Tx11.3 (71 aa).

The first 19 residues, 1–19 (MKLCVTFLLVLVILPSVTG), serve as a signal peptide directing secretion. Positions 20–47 (VKSSERTLSGAALRGDRGTCSGRGQECK) are excised as a propeptide. Intrachain disulfides connect Cys-39–Cys-53, Cys-46–Cys-58, Cys-52–Cys-63, and Cys-57–Cys-70.

Belongs to the I1 superfamily. In terms of tissue distribution, expressed by the venom duct.

The protein localises to the secreted. The protein is Conotoxin Tx11.3 of Conus textile (Cloth-of-gold cone).